Consider the following 155-residue polypeptide: Ribosome maturation factor RimP (155 aa).

The protein belongs to the RimP family.

The protein resides in the cytoplasm. Its function is as follows. Required for maturation of 30S ribosomal subunits. This Macrococcus caseolyticus (strain JCSC5402) (Macrococcoides caseolyticum) protein is Ribosome maturation factor RimP.